We begin with the raw amino-acid sequence, 422 residues long: UDP-N-acetylglucosamine 1-carboxyvinyltransferase (422 aa).

22-23 (KN) provides a ligand contact to phosphoenolpyruvate. Residue Arg-92 participates in UDP-N-acetyl-alpha-D-glucosamine binding. Cys-116 (proton donor) is an active-site residue. Cys-116 carries the post-translational modification 2-(S-cysteinyl)pyruvic acid O-phosphothioketal. UDP-N-acetyl-alpha-D-glucosamine is bound by residues 121-125 (RPVDQ), Asp-305, and Ile-327.

Belongs to the EPSP synthase family. MurA subfamily.

It is found in the cytoplasm. It carries out the reaction phosphoenolpyruvate + UDP-N-acetyl-alpha-D-glucosamine = UDP-N-acetyl-3-O-(1-carboxyvinyl)-alpha-D-glucosamine + phosphate. The protein operates within cell wall biogenesis; peptidoglycan biosynthesis. Cell wall formation. Adds enolpyruvyl to UDP-N-acetylglucosamine. The chain is UDP-N-acetylglucosamine 1-carboxyvinyltransferase from Sorangium cellulosum (strain So ce56) (Polyangium cellulosum (strain So ce56)).